A 2799-amino-acid polypeptide reads, in one-letter code: MISETFCKSSADEGYTSFPIRPTSIDRPVLDKTSQCEFALFPHFCNIHTLSTLSNASWALIAGQLTNSTKIILGVPSSGESTPVHDIESRTALQPAAVPLLIDWRPEQSVADYLNHVQSRIADATALDGASSQLLAGGFPGDNYARHIQTLIVVETIETSPGSINGTQKLQRLEYDHKKNSACATLVIEMRLQKTGIMADASFDTRALGPWLVYNLLKRLEYVMKQLCCVSSGHVLADIDMITPEDLEQIWQCNDPIPAPVERCMHDVVQERCRLQPNALAVDAWDGRLTYRELDQLSDRLAGRLVNQGIEPDMLVPLCFHKSMWMPVTMMGVLKAGGGFVLLEPSFPEQRLRAMVEEIKPSIILASSTTRALSLRLLDNVIQVDSELFNYPNPSANGFPQLQPSSTAMFGVFTSGSTGKPKGAILTHANYCSAFTYQLDLLGFKKDSRVFDFASYAFDVSVHNVFASLASGACLCIASEEERRQDICKSISDMRATIVHLTPSVTRLIQPEKVPLLQTVIFTGEPLSVEDVKPWWGKVNIVNEYGPAECTINTINSNPSSPEEATMIGKGVGVAVWIVDPNDHDLLAPIGSVGELLIEGALVGRGYINETERNAAAFIENPKWLLHGRPGRPGRQGRLYKTGDLVKYGEDGNLIFVGRKDTQVKIYGQRVDLREVEHWIQSCGHGAGQVVAEMIAPRADDPAPALVAFLQIGHTGLGGPLCPNSTEATLRPVPDEVEAKLAKHLPSYMVPKMFIAMSQFPMTATGKTDRRQLRKIGSSFSLEQLAEVRAKARGRLERQPLTGMERLLCDVWSKVLRLERRTIGPESNFFHLGGDSIAAMKSVGEARKSGIKVAVADVFRHPSLQDLSRQSRYIEDNSLDHIEPFDLLGEVFNRVSFLKDASHQYGIDPSAIYDAYPCTPLQEGLMSLTAKRPGDYIEQMILELGGDVEVDNLWVAWDHVARVTPILRTRLVHHNDLGLVQLVLEENTSRTDATGLDEYLDADRRRSMSLGEPLSRYGLVRNETGEPKWFVWSIHHAIYDGWSVQLILDAAYRAYRGEKIQQGPQFQVFIKYVQQQRHHNQGRVVEYWQKTLAGFKGTQFPSVVPSVQQPVADTSLCCCIPNPQNSRVGVTTSMLIRAAWALVVGTMANSEDVVFGSTLYGRNASVAGLEELAAPTIATVPVRVRFSRNQTVSEYLEAIQQEATAMIPFEQTGLQEIAQISDSCQMACQFQTHLVIQPEEHAQGKGPLGTWQIRSQEQWFSTYSLTLELWLGTDHITASAMFDSRIIESWVVRSMLQRLEGVMYQLNYATSSQLLGDITILTTEDLEQIWEWNKTIPTPVNRCVHEIIHDKVQARPNAPAICAWDGELTYNELNRLADQLSGRLTELGVGPHLLVPLCFEKSLWTAVAILGVIKSGGGFVLLDASLPEQRLRSIMQQVKGDLVITCPSQQALCSRLGAQTITLSWGFFSTLRGYEAGLRIQEYSPSSILYAVFTSGSTGTPKGVLITHGNMASALHYQSEAMGLSEDSRLYDFASYSFDVAISNIFTVLAAGGCLCVPSEEHRKNNLEGSIISLRANALDLTPSIAQLLSSARLLNVRSLTLGGESVLATAAEPWFGKLQMRNAYGPSECTPTCIINHNPSSPEQATEIGNGVGVVTWVVDPSNHEVLLPPGCTGELLLEGPLVGPGYLGDGEKTAAAFIHDPVWLTKGTHNRTGRHGRLYKTGDLVKYNKNGTLSFVRRKDTQIKLRGQRVELGEVEHVLRSHSCVVDAVAVSQRDDKLGAWIAGFVTIRADGQKKHQGDGEYEQQQIQSWEDQFDGETYTSIEAMPREAIGRDFIGWTSMYDGSDIDKGDMNEWLDDTINTILDGGPVGHVLEIGCGSGMMLFNLANKGLQSYIGIEPSRRAVDATTRIANSIPNLKERIRIVKGTGEDLQRLGTRLGTPISPDLVVINSVIQYFPSQEYLVKLIQDIFKLGSVKTIFFGDVRSHALHKEFLALRALQILGETASREEIGQVLSNLHRAEPELLLDPEFFTSLPARLPGHIAHVEILPKKMEATNELSSFRYGAVVHLDLEHRQTPDIDPKSWVSYTSRGLDCKSLLALLKNRPEAADTIAICDIPHSKTVFATELIDDLENGASEARHSRHWAQFICQKAKQRSSLSAIDLVKLAEEAGYRVEISWARQYSQRGGLDAVFHRCIADNDARRVLFRFPTDHTDRPYHFLSSKPLRRQAEIKIQKELEAKLRCQLPSHMIPQTITILDRMPANHNGKVDRQILADSVQRQWTGRGRRRSPTTDMEKELQRIWSHVLNISPDSIGLDDGFVHLGGNSLNAMKIVHMARQAGIDLTVADMFRYSETTIERLLLDCCCDDTCGKGTSADAVNWTYLMAAIDERDAYLAAIQAGEKSHLVNGDMQADSDNLLTVLLTGANGFIGTQILRQLLEHGRVDRVICIVRGESPSVARQRTIEAAKKALWWTEFHQEMLEVWPGDLSLPRLGLDEVKWRLLAEGKAANIIIHNGASVNFVKSYAALEAANVDSTVEMVSVVTRNPSMRLIYVSSARSQDPMEEEEEDMAQALTKNPNGYNQTKFIAEALVRRAALRTSPRQDQFMVVSPGLVVGTPTEGVANADDWLWRMAAACIRVGVYNVDNSDKWVPLCDVSTTATVIIEAALGHPSTSRTVTQVRGGLTMGEFWETLAAAGYPLVGTRVAECTAAIQEDILANGENHPLGALADMLQDLEDTTNVQWADSWRKNGLCSPARLKAALCKSAEFLSRVEFLPSPNLVHGRVVQETNMRAFTRSGF.

Residues 270-666 form an adenylation 1 region; that stretch reads QERCRLQPNA…VGRKDTQVKI (397 aa). Positions 799–875 constitute a Carrier 1 domain; the sequence is QPLTGMERLL…DLSRQSRYIE (77 aa). Ser836 bears the O-(pantetheine 4'-phosphoryl)serine mark. The segment at 914–1327 is condensation; sequence DAYPCTPLQE…ITILTTEDLE (414 aa). The interval 1350 to 1743 is adenylation 2; it reads DKVQARPNAP…TLSFVRRKDT (394 aa). A methylation (Met) domain region spans residues 1874–1970; it reads LEIGCGSGMM…EYLVKLIQDI (97 aa). One can recognise a Carrier 2 domain in the interval 2290–2368; it reads SPTTDMEKEL…RLLLDCCCDD (79 aa). Ser2327 carries the O-(pantetheine 4'-phosphoryl)serine modification. Positions 2420 to 2737 are thiesterase (TE) domain; that stretch reads TVLLTGANGF…LADMLQDLED (318 aa).

This sequence belongs to the NRP synthetase family. Pantetheine 4'-phosphate serves as cofactor.

It carries out the reaction (S)-1-pyrroline-5-carboxylate + L-arginine + S-adenosyl-L-methionine + 2 ATP = peramine + 2 AMP + S-adenosyl-L-homocysteine + 2 diphosphate + H2O + 2 H(+). It participates in secondary metabolite biosynthesis. In terms of biological role, nonribosomal peptide synthetase; part of the gene cluster that mediates the biosynthesis of pyrrolopyrazines, secondary metabolites showing insecticidal activity. The single multifunctional NRPS ppzA is responsible for the biosynthesis of peramine. The condensation domain of ppzA is proposed to catalyze formation of a peptide bond between 1-pyrroline-5-carboxylate and arginine. The methylation domain of ppzA would catalyze the N-methylation of the alpha-amino group of arginine. The reductase domain is proposed to be responsible for reduction of the thioester and the cyclization to form an iminium ion resulting in release from the peptide synthetase. Deprotonation of this intermediate and oxidation of the pyrroline ring would give rise to peramine. This final oxidation to give the pyrrole functionality may be spontaneous. In Epichloe species that produce only peramine, the peramine synthetase gene is not localized in a gene cluster, in contrast to Metarhizium species that contain additional pyrrolopyrazine biosynthesis genes. The 2-oxoglutarate-Fe(II) type oxidoreductase ppzC hydroxylates peramine to yield the newly identified compound 8-hydroxyperamine whereas ppzD converts L-proline into trans-4-hydroxy-L-proline, a precursor of peramine biosynthesis. The polypeptide is Peramine synthetase ppzA (Metarhizium majus (strain ARSEF 297)).